We begin with the raw amino-acid sequence, 77 residues long: Acyl carrier protein (77 aa).

In terms of domain architecture, Carrier spans 1–76 (MDREQRIKEI…DVINYLNEKL (76 aa)). Ser-36 bears the O-(pantetheine 4'-phosphoryl)serine mark.

It belongs to the acyl carrier protein (ACP) family. Post-translationally, 4'-phosphopantetheine is transferred from CoA to a specific serine of apo-ACP by AcpS. This modification is essential for activity because fatty acids are bound in thioester linkage to the sulfhydryl of the prosthetic group.

The protein localises to the cytoplasm. It functions in the pathway lipid metabolism; fatty acid biosynthesis. Carrier of the growing fatty acid chain in fatty acid biosynthesis. The sequence is that of Acyl carrier protein from Hydrogenobaculum sp. (strain Y04AAS1).